Consider the following 102-residue polypeptide: Large ribosomal subunit protein bL21 (102 aa).

Positions 79–91 (RKDSKRKKGHRQP) are enriched in basic residues. The segment at 79–102 (RKDSKRKKGHRQPYTKLTIDKINA) is disordered.

Belongs to the bacterial ribosomal protein bL21 family. Part of the 50S ribosomal subunit. Contacts protein L20.

Its function is as follows. This protein binds to 23S rRNA in the presence of protein L20. The protein is Large ribosomal subunit protein bL21 of Staphylococcus epidermidis (strain ATCC 35984 / DSM 28319 / BCRC 17069 / CCUG 31568 / BM 3577 / RP62A).